The following is a 268-amino-acid chain: Undecaprenyl-diphosphatase (268 aa).

The next 7 membrane-spanning stretches (helical) occupy residues 47–67, 85–105, 109–129, 144–164, 184–204, 217–237, and 246–266; these read FAVL…FSKL, IGVL…GGLI, LFNP…LLWV, FPLP…FPGV, AAEF…VYDL, LIVA…VKTF, and FALF…ALAL.

The protein belongs to the UppP family.

The protein resides in the cell inner membrane. The enzyme catalyses di-trans,octa-cis-undecaprenyl diphosphate + H2O = di-trans,octa-cis-undecaprenyl phosphate + phosphate + H(+). Functionally, catalyzes the dephosphorylation of undecaprenyl diphosphate (UPP). Confers resistance to bacitracin. This Rhodopseudomonas palustris (strain BisA53) protein is Undecaprenyl-diphosphatase.